We begin with the raw amino-acid sequence, 139 residues long: MEFSVRTIINNKVYINGENLLHAMCRHGNSLALSIIAQSINKNYQYLLNEYNREGRKCIHIAAVMHKGQVATELIIILLNFGADVNGRVLCTGDTVLHIAVYLKDYYLAEWLCRRSGININARNICRTHTISNSTEEKR.

3 ANK repeats span residues 16 to 48 (NGEN…QYLL), 54 to 87 (EGRK…DVNG), and 92 to 122 (TGDT…NINA).

Belongs to the polydnaviridae I-Kappa-B-like protein family.

Its function is as follows. Suppresses the host immune response through NF-kappa-B inactivation. Possesses ankyrin repeat domain required for NF-kappa-B binding but lack the regulatory regions required for dissociation from NF-kappa-B and degradation. Therefore, prevents host NF-kappa-B release and subsequent activation. The sequence is that of I-Kappa-B like protein N1 (N2) from Microplitis demolitor bracovirus (isolate Webb) (MdBV).